The following is a 141-amino-acid chain: Large ribosomal subunit protein uL11 (141 aa).

The protein belongs to the universal ribosomal protein uL11 family. Part of the ribosomal stalk of the 50S ribosomal subunit. Interacts with L10 and the large rRNA to form the base of the stalk. L10 forms an elongated spine to which L12 dimers bind in a sequential fashion forming a multimeric L10(L12)X complex. Post-translationally, one or more lysine residues are methylated.

In terms of biological role, forms part of the ribosomal stalk which helps the ribosome interact with GTP-bound translation factors. The protein is Large ribosomal subunit protein uL11 of Prochlorococcus marinus (strain MIT 9211).